Here is a 345-residue protein sequence, read N- to C-terminus: Tetraacyldisaccharide 4'-kinase (345 aa).

51-58 (HVGGAGKT) lines the ATP pocket.

The protein belongs to the LpxK family.

It catalyses the reaction a lipid A disaccharide + ATP = a lipid IVA + ADP + H(+). The protein operates within glycolipid biosynthesis; lipid IV(A) biosynthesis; lipid IV(A) from (3R)-3-hydroxytetradecanoyl-[acyl-carrier-protein] and UDP-N-acetyl-alpha-D-glucosamine: step 6/6. Transfers the gamma-phosphate of ATP to the 4'-position of a tetraacyldisaccharide 1-phosphate intermediate (termed DS-1-P) to form tetraacyldisaccharide 1,4'-bis-phosphate (lipid IVA). This chain is Tetraacyldisaccharide 4'-kinase, found in Bradyrhizobium sp. (strain BTAi1 / ATCC BAA-1182).